Consider the following 322-residue polypeptide: uncharacterized protein (322 aa).

2 disordered regions span residues 1-51 and 107-130; these read MARS…GAWA and QERQ…DRPD. Over residues 119-130 the composition is skewed to basic and acidic residues; sequence LHLEPGNEDRPD.

In terms of tissue distribution, expressed in skin and fetal lung.

This is an uncharacterized protein from Homo sapiens (Human).